Reading from the N-terminus, the 422-residue chain is UDP-N-acetylglucosamine 1-carboxyvinyltransferase (422 aa).

Position 22 to 23 (22 to 23) interacts with phosphoenolpyruvate; sequence KN. Arg93 is a UDP-N-acetyl-alpha-D-glucosamine binding site. The active-site Proton donor is the Cys117. Cys117 carries the post-translational modification 2-(S-cysteinyl)pyruvic acid O-phosphothioketal. UDP-N-acetyl-alpha-D-glucosamine contacts are provided by residues 122–126, Asp308, and Leu330; that span reads RPVDL.

The protein belongs to the EPSP synthase family. MurA subfamily.

It is found in the cytoplasm. It catalyses the reaction phosphoenolpyruvate + UDP-N-acetyl-alpha-D-glucosamine = UDP-N-acetyl-3-O-(1-carboxyvinyl)-alpha-D-glucosamine + phosphate. Its pathway is cell wall biogenesis; peptidoglycan biosynthesis. Its function is as follows. Cell wall formation. Adds enolpyruvyl to UDP-N-acetylglucosamine. This Helicobacter acinonychis (strain Sheeba) protein is UDP-N-acetylglucosamine 1-carboxyvinyltransferase.